Reading from the N-terminus, the 171-residue chain is Small ribosomal subunit protein bS16 (171 aa).

Residues 114–171 (EGGPTTEAAKPKKKAATSGAKKAAKAAEPEAAASEAAEPEAAAAPAEGGEQAESSAES) are disordered. Over residues 142-171 (PEAAASEAAEPEAAAAPAEGGEQAESSAES) the composition is skewed to low complexity.

It belongs to the bacterial ribosomal protein bS16 family.

The polypeptide is Small ribosomal subunit protein bS16 (Mycolicibacterium paratuberculosis (strain ATCC BAA-968 / K-10) (Mycobacterium paratuberculosis)).